Consider the following 290-residue polypeptide: Arylamine N-acetyltransferase 2 (290 aa).

The Acyl-thioester intermediate role is filled by cysteine 68. The CoA site is built by threonine 103 and glycine 104. 106–107 (VH) lines the substrate pocket. Residues histidine 107 and aspartate 122 contribute to the active site. 3 residues coordinate CoA: tyrosine 208, threonine 214, and serine 287.

The protein belongs to the arylamine N-acetyltransferase family.

It is found in the cytoplasm. The catalysed reaction is an arylamine + acetyl-CoA = an N-acetylarylamine + CoA. It carries out the reaction an N-hydroxyarylamine + acetyl-CoA = an N-acetoxyarylamine + CoA. Catalyzes the N- or O-acetylation of various arylamine and heterocyclic amine substrates. Participates in the detoxification of a plethora of hydrazine and arylamine drugs, and is able to bioactivate several known carcinogens. The chain is Arylamine N-acetyltransferase 2 (NAT2) from Homo sapiens (Human).